Consider the following 394-residue polypeptide: Na(+)/H(+) antiporter NhaA (394 aa).

A run of 11 helical transmembrane segments spans residues 14 to 34, 59 to 79, 95 to 115, 125 to 145, 154 to 174, 179 to 199, 213 to 233, 254 to 274, 292 to 312, 328 to 348, and 363 to 383; these read AGGL…NSAL, LLLW…GLEV, VFPA…YLLF, GWAI…ALLG, VFLL…IALF, VSLQ…YMNW, LVLW…GVIV, GLHP…NAGV, IATG…WLAV, IFAV…IASL, and LGIL…LRLV.

It belongs to the NhaA Na(+)/H(+) (TC 2.A.33) antiporter family.

It localises to the cell inner membrane. The enzyme catalyses Na(+)(in) + 2 H(+)(out) = Na(+)(out) + 2 H(+)(in). Functionally, na(+)/H(+) antiporter that extrudes sodium in exchange for external protons. The chain is Na(+)/H(+) antiporter NhaA from Yersinia pestis bv. Antiqua (strain Angola).